A 488-amino-acid chain; its full sequence is Putative serine carboxypeptidase-like 30 (488 aa).

The first 28 residues, 1–28, serve as a signal peptide directing secretion; the sequence is MDNHTKSFSSLLISLWFTALLILVEMVS. 3 cysteine pairs are disulfide-bonded: Cys-99–Cys-368, Cys-262–Cys-275, and Cys-299–Cys-336. Asn-150 carries N-linked (GlcNAc...) asparagine glycosylation. Ser-192 is an active-site residue. Asn-263 is a glycosylation site (N-linked (GlcNAc...) asparagine). Asn-364 and Asn-375 each carry an N-linked (GlcNAc...) asparagine glycan. Active-site residues include Asp-405 and His-457.

The protein belongs to the peptidase S10 family. In terms of tissue distribution, expression not detected.

It is found in the secreted. Probable carboxypeptidase. The protein is Putative serine carboxypeptidase-like 30 (SCPL30) of Arabidopsis thaliana (Mouse-ear cress).